The primary structure comprises 74 residues: MAEEESVPKMVAPEDDIREIHSRLDEIERRLDFVWGEVYQRFGKRIGRDIGILYGLVIGLYLCMLYILLGVAFR.

A helical transmembrane segment spans residues 50 to 70; sequence IGILYGLVIGLYLCMLYILLG.

It belongs to the MtrG family. As to quaternary structure, the complex is composed of 8 subunits; MtrA, MtrB, MtrC, MtrD, MtrE, MtrF, MtrG and MtrH.

It localises to the cell membrane. It catalyses the reaction 5-methyl-5,6,7,8-tetrahydromethanopterin + coenzyme M + 2 Na(+)(in) = 5,6,7,8-tetrahydromethanopterin + methyl-coenzyme M + 2 Na(+)(out). It functions in the pathway one-carbon metabolism; methanogenesis from CO(2); methyl-coenzyme M from 5,10-methylene-5,6,7,8-tetrahydromethanopterin: step 2/2. Part of a complex that catalyzes the formation of methyl-coenzyme M and tetrahydromethanopterin from coenzyme M and methyl-tetrahydromethanopterin. This is an energy-conserving, sodium-ion translocating step. In Methanopyrus kandleri (strain AV19 / DSM 6324 / JCM 9639 / NBRC 100938), this protein is Tetrahydromethanopterin S-methyltransferase subunit G.